The following is a 227-amino-acid chain: Ubiquitin domain-containing protein 1 (227 aa).

A disordered region spans residues 1-36; that stretch reads MGNCVGRQRRERPTAPGHPRKRAGRNEPLKKERLKW. Residues 24-36 show a composition bias toward basic and acidic residues; sequence GRNEPLKKERLKW. Residues 149–224 form the Ubiquitin-like domain; sequence FPLKVRLSTG…IQVIINQPPP (76 aa).

In terms of assembly, interacts with UBTD1.

Its function is as follows. May be involved in the regulation of cellular senescence through a positive feedback loop with TP53. Is a TP53 downstream target gene that increases the stability of TP53 protein by promoting the ubiquitination and degradation of MDM2. The chain is Ubiquitin domain-containing protein 1 (UBTD1) from Bos taurus (Bovine).